The chain runs to 811 residues: Ribonucleoside-diphosphate reductase large subunit (811 aa).

Substrate-binding positions include T231, 246 to 247, G277, 450 to 454, and 636 to 640; these read SC, NLCTE, and PTASS. Residues C247 and C467 are joined by a disulfide bond. N450 (proton acceptor) is an active-site residue. The Cysteine radical intermediate role is filled by C452. E454 acts as the Proton acceptor in catalysis.

The protein belongs to the ribonucleoside diphosphate reductase large chain family. Heterotetramer composed of a homodimer of the large subunit (R1) and a homodimer of the small subunit (R2). Larger multisubunit protein complex are also active, composed of (R1)n(R2)n.

The enzyme catalyses a 2'-deoxyribonucleoside 5'-diphosphate + [thioredoxin]-disulfide + H2O = a ribonucleoside 5'-diphosphate + [thioredoxin]-dithiol. Ribonucleoside-diphosphate reductase holoenzyme provides the precursors necessary for viral DNA synthesis. Allows virus growth in non-dividing cells, as well as reactivation from latency in infected hosts. Catalyzes the biosynthesis of deoxyribonucleotides from the corresponding ribonucleotides. The sequence is that of Ribonucleoside-diphosphate reductase large subunit from Amazona oratrix (yellow-headed parrot).